Here is a 542-residue protein sequence, read N- to C-terminus: Chaperonin GroEL 2 (542 aa).

Residues 30-33 (TLGP), Lys-51, 87-91 (DGTTT), Gly-415, and Asp-495 each bind ATP.

The protein belongs to the chaperonin (HSP60) family. In terms of assembly, forms a cylinder of 14 subunits composed of two heptameric rings stacked back-to-back. Interacts with the co-chaperonin GroES.

Its subcellular location is the cytoplasm. The catalysed reaction is ATP + H2O + a folded polypeptide = ADP + phosphate + an unfolded polypeptide.. Functionally, together with its co-chaperonin GroES, plays an essential role in assisting protein folding. The GroEL-GroES system forms a nano-cage that allows encapsulation of the non-native substrate proteins and provides a physical environment optimized to promote and accelerate protein folding. In Methylococcus capsulatus (strain ATCC 33009 / NCIMB 11132 / Bath), this protein is Chaperonin GroEL 2.